The sequence spans 400 residues: MSLYRTFTADDAVEYARQYGGVSQPQTLVTAEEIGDGNLNLVFKIKDEAGISRVIVKQALPYVRCVGESWPLTLDRARIEAETLLTHARFCPQHTVTVLYHDPELAVMVQEDLSDHRIWRSELVRGADYPQAAAQLGEYLAQTLFHTSDFYQHPHEKKAAVSQFTNPELCEITEDLFFTDPYIDHERNQFDAALTPDVQTLRDDRALKLAVAGLKHRFLSKAEALLHGDIHSGSIFVAEGRLKVIDAEFGFYGPMGFDIGTAIGNLLLNYCGLPGLLAPREAAAGRERRLEDIRTLWQTFSARFLALSESDCREPALAESGYAALFLQQVWLDAIGFCGTELIRRTIGLAHVVDLDSIQETDARLACQRHVLSLGRTLVLAAPHIADVDALLARVRQSGA.

ATP is bound by residues asparagine 40, lysine 57, and 111 to 113 (EDL). A substrate-binding site is contributed by aspartate 229. Residue 246-248 (DAE) participates in ATP binding. Residue arginine 344 coordinates substrate.

This sequence belongs to the methylthioribose kinase family. In terms of assembly, homodimer.

It catalyses the reaction 5-(methylsulfanyl)-D-ribose + ATP = 5-(methylsulfanyl)-alpha-D-ribose 1-phosphate + ADP + H(+). Its pathway is amino-acid biosynthesis; L-methionine biosynthesis via salvage pathway; S-methyl-5-thio-alpha-D-ribose 1-phosphate from S-methyl-5'-thioadenosine (hydrolase route): step 2/2. Functionally, catalyzes the phosphorylation of methylthioribose into methylthioribose-1-phosphate. The chain is Methylthioribose kinase from Pectobacterium atrosepticum (strain SCRI 1043 / ATCC BAA-672) (Erwinia carotovora subsp. atroseptica).